The primary structure comprises 264 residues: DNA repair protein RecO (264 aa).

Belongs to the RecO family.

Functionally, involved in DNA repair and RecF pathway recombination. The sequence is that of DNA repair protein RecO from Prosthecochloris aestuarii (strain DSM 271 / SK 413).